A 1218-amino-acid polypeptide reads, in one-letter code: Probable RNA-dependent RNA polymerase SHL2 (1218 aa).

Belongs to the RdRP family.

The enzyme catalyses RNA(n) + a ribonucleoside 5'-triphosphate = RNA(n+1) + diphosphate. Its function is as follows. Involved in the RNA silencing pathway. Probably required for the generation of small interfering RNAs (siRNAs). Regulates shoot apical meristem (SAM) initiation and maintenance and leaf polarization through the trans-acting siRNAS (ta-siRNAs) pathway which probably modulates the expression of the ARF2, ARF3, ARF4, ARF14 and ARF15 genes. This chain is Probable RNA-dependent RNA polymerase SHL2 (SHL2), found in Oryza sativa subsp. japonica (Rice).